A 315-amino-acid chain; its full sequence is Ribosomal RNA small subunit methyltransferase H (315 aa).

S-adenosyl-L-methionine contacts are provided by residues 34-36 (GGH), aspartate 53, aspartate 100, and histidine 107.

This sequence belongs to the methyltransferase superfamily. RsmH family.

The protein resides in the cytoplasm. It carries out the reaction cytidine(1402) in 16S rRNA + S-adenosyl-L-methionine = N(4)-methylcytidine(1402) in 16S rRNA + S-adenosyl-L-homocysteine + H(+). Specifically methylates the N4 position of cytidine in position 1402 (C1402) of 16S rRNA. In Treponema denticola (strain ATCC 35405 / DSM 14222 / CIP 103919 / JCM 8153 / KCTC 15104), this protein is Ribosomal RNA small subunit methyltransferase H.